The sequence spans 626 residues: (+)-3-carene synthase 1, chloroplastic (626 aa).

The transit peptide at 1–45 (MSLISAVPLASSCVSKSLISSVREHTALRRAIATLQMSRRGKSVA) directs the protein to the chloroplast. The Mg(2+) site is built by aspartate 377, aspartate 381, and aspartate 529. The DDXXD motif motif lies at 377–381 (DDMYD).

It belongs to the terpene synthase family. Tpsd subfamily. It depends on Mg(2+) as a cofactor. Mn(2+) serves as cofactor.

Its subcellular location is the plastid. It localises to the chloroplast. It carries out the reaction (2E)-geranyl diphosphate = (+)-car-3-ene + diphosphate. The catalysed reaction is (2E)-geranyl diphosphate = terpinolene + diphosphate. Its pathway is terpene metabolism; oleoresin biosynthesis. It functions in the pathway secondary metabolite biosynthesis; terpenoid biosynthesis. Monoterpene synthase (TPS) involved in the biosynthesis of monoterpene natural products included in conifer oleoresin secretions and volatile emissions; these compounds contribute to biotic and abiotic stress defense against herbivores and pathogens. Catalyzes the conversion of (2E)-geranyl diphosphate (GPP) to (+)-car-3-ene and, to a lower extent, to terpinolene. The chain is (+)-3-carene synthase 1, chloroplastic from Pinus contorta (Shore pine).